Consider the following 270-residue polypeptide: MFGMLSSSFEDDPFFSDSFIAHRESMRQMMRSFSEPFGRDMLSISDRRGRARNRMGHEDEENSLTHTDVSPFQAMDRMMLNMRNSMQELQRNFGHLSMDPNGHSFSSSSVMTYSKVGDEPPKVFQASTQTRRAPGGIKETRKALRDSDSGLEKMAVGHHLHDRAHVIKKSKNNKTGDEEVNQEFINMNECDAHAFDDEWQNEILKYQPRGQWRNLDNSRMRSVAHENSGSRELKRREKHHQSPAIEHGRRSNVFVDKLNIKGSPVKINKK.

A phosphoserine mark is found at serine 6, serine 8, serine 32, and serine 34. Positions 50–125 are interaction with COPS3; the sequence is RARNRMGHED…VGDEPPKVFQ (76 aa). Disordered stretches follow at residues 127-148 and 221-247; these read STQTRRAPGGIKETRKALRDSD and RSVAHENSGSRELKRREKHHQSPAIEH. Basic and acidic residues predominate over residues 138 to 148; it reads KETRKALRDSD.

The protein belongs to the MLF family. In terms of assembly, interacts with CENPU. Also interacts with NRBP1/MADM, YWHAZ/14-3-3-zeta and HNRPUL2/MANP. NRBP1 recruits a serine kinase which phosphorylates both itself and MLF1. Phosphorylated MLF1 then binds to YWHAZ and is retained in the cytoplasm. Retained in the nucleus by binding to HNRPUL2. Binds to COPS3/CSN3 which is required for suppression of COP1 and activation of p53. In terms of processing, phosphorylation is required for binding to YWHAZ.

The protein localises to the cytoplasm. It localises to the nucleus. Its subcellular location is the cell projection. The protein resides in the cilium. It is found in the cytoskeleton. The protein localises to the cilium basal body. Involved in lineage commitment of primary hemopoietic progenitors by restricting erythroid formation and enhancing myeloid formation. Interferes with erythropoietin-induced erythroid terminal differentiation by preventing cells from exiting the cell cycle through suppression of CDKN1B/p27Kip1 levels. Suppresses COP1 activity via CSN3 which activates p53 and induces cell cycle arrest. Binds DNA and affects the expression of a number of genes so may function as a transcription factor in the nucleus. This is Myeloid leukemia factor 1 (MLF1) from Bos taurus (Bovine).